Reading from the N-terminus, the 515-residue chain is Maturase K (515 aa).

Belongs to the intron maturase 2 family. MatK subfamily.

Its subcellular location is the plastid. It localises to the chloroplast. Functionally, usually encoded in the trnK tRNA gene intron. Probably assists in splicing its own and other chloroplast group II introns. The chain is Maturase K from Helonias bullata (Swamp pink).